The primary structure comprises 275 residues: 4-deoxy-L-threo-5-hexosulose-uronate ketol-isomerase (275 aa).

The Zn(2+) site is built by H193, H195, E200, and H242.

Belongs to the KduI family. The cofactor is Zn(2+).

The catalysed reaction is 5-dehydro-4-deoxy-D-glucuronate = 3-deoxy-D-glycero-2,5-hexodiulosonate. It participates in glycan metabolism; pectin degradation; 2-dehydro-3-deoxy-D-gluconate from pectin: step 4/5. Its function is as follows. Catalyzes the isomerization of 5-dehydro-4-deoxy-D-glucuronate to 3-deoxy-D-glycero-2,5-hexodiulosonate. The sequence is that of 4-deoxy-L-threo-5-hexosulose-uronate ketol-isomerase from Bacillus licheniformis (strain ATCC 14580 / DSM 13 / JCM 2505 / CCUG 7422 / NBRC 12200 / NCIMB 9375 / NCTC 10341 / NRRL NRS-1264 / Gibson 46).